The sequence spans 68 residues: Conotoxin VnMMSK-01 (68 aa).

The first 20 residues, 1-20 (MMSKLGVLLTICLLLFPLTA), serve as a signal peptide directing secretion. A propeptide spanning residues 21–50 (VPMDGDQPADLPALRTQDFEPERSPWFDPV) is cleaved from the precursor. Cystine bridges form between C53–C65, C54–C61, and C58–C64. A 4-hydroxyproline modification is found at P63.

This sequence belongs to the conotoxin M superfamily. Expressed by the venom duct.

It is found in the secreted. In Conus ventricosus (Mediterranean cone), this protein is Conotoxin VnMMSK-01.